The chain runs to 520 residues: 1,4-alpha-glucan branching enzyme TTHA1902 (520 aa).

The active-site Nucleophile is Glu184. Substrate-binding residues include Arg265 and Gly282. The Proton donor role is filled by Asp353. The substrate site is built by Trp404, Asp460, and Gln469.

This sequence belongs to the glycosyl hydrolase 57 family.

The enzyme catalyses Transfers a segment of a (1-&gt;4)-alpha-D-glucan chain to a primary hydroxy group in a similar glucan chain.. It functions in the pathway glycan biosynthesis; glycogen biosynthesis. In terms of biological role, catalyzes the formation of branch points in alpha-glucans by cleavage of an alpha-1,4 glycosidic bond and subsequent transfer of the cleaved-off oligosaccharide to a new alpha-1,6 position. The branch chain-length distribution of the reaction products shows degree of polymerization (DP) of 3 to 13, with two local maxima at DP 7 and DP 11. Exhibits an alpha-retaining catalytic mechanism. Is involved in glycogen biosynthesis. Shows a secondary activity, i.e. the hydrolysis of the substrate, being 4% of the total activity. Can use amylose as substrate but not alpha-1,4-linked oligosaccharides of 2-7 glucose residues, beta-cyclodextrin, 6-O-glucosyl-beta-cyclodextrin and 6-O-maltosyl-beta-cyclodextrin. Is not able to branch amylopectin further, it only hydrolyzes amylopectin. Thus, displays preference for linear and long substrates (amylose) over branched structures (amylopectin). The chain is 1,4-alpha-glucan branching enzyme TTHA1902 from Thermus thermophilus (strain ATCC 27634 / DSM 579 / HB8).